The sequence spans 524 residues: MIHKSDSDTTVRRFDLSQQFTAMQRISVVLSRATEASKTLQEVLSVLHNDAFMQHGMICLYDSQQEILSIEALQQTEDQTLPGSTQIRYRPGEGLVGTVLAQGQSLVLPRVADDQRFLDRLSLYDYDLPFIAVPLMGPHSRPIGVLAAHAMARQEERLPACTRFLETVANLIAQTIRLMILPTSAAQAPQQSPRIERPRACTPSRGFGLENMVGKSPAMRQIMDIIRQVSRWDTTVLVRGESGTGKELIANAIHHNSPRAAAAFVKFNCAALPDNLLESELFGHEKGAFTGAVRQRKGRFELADGGTLFLDEIGESSASFQAKLLRILQEGEMERVGGDETLRVNVRIIAATNRHLEEEVRLGHFREDLYYRLNVMPIALPPLRERQEDIAELAHFLVRKIAHSQGRTLRISDGAIRLLMEYSWPGNVRELENCLERSAVLSESGLIDRDVILFNHRDNPPKALASSGPAEDGWLDNSLDERQRLIAALEKAGWVQAKAARLLGMTPRQVAYRIQIMDITMPRL.

The a domain stretch occupies residues 1 to 182; that stretch reads MIHKSDSDTT…AQTIRLMILP (182 aa). Residues 35 to 176 enclose the GAF domain; that stretch reads EASKTLQEVL…TVANLIAQTI (142 aa). Residues 212-481 enclose the Sigma-54 factor interaction domain; that stretch reads MVGKSPAMRQ…DGWLDNSLDE (270 aa). ATP is bound by residues 240-247 and 303-312; these read GESGTGKE and ADGGTLFLDE. The interval 482-524 is C-terminal DNA-binding domain; the sequence is RQRLIAALEKAGWVQAKAARLLGMTPRQVAYRIQIMDITMPRL. A DNA-binding region (H-T-H motif) is located at residues 496-515; sequence QAKAARLLGMTPRQVAYRIQ.

As to quaternary structure, interacts with sigma-54.

In terms of biological role, required for activation of most nif operons, which are directly involved in nitrogen fixation. This Klebsiella pneumoniae protein is Nif-specific regulatory protein (nifA).